A 214-amino-acid chain; its full sequence is Large ribosomal subunit protein uL1 (214 aa).

This sequence belongs to the universal ribosomal protein uL1 family. Part of the 50S ribosomal subunit.

Binds directly to 23S rRNA. Probably involved in E site tRNA release. In terms of biological role, protein L1 is also a translational repressor protein, it controls the translation of its operon by binding to its mRNA. This is Large ribosomal subunit protein uL1 from Methanoregula boonei (strain DSM 21154 / JCM 14090 / 6A8).